A 499-amino-acid chain; its full sequence is Aspartyl/glutamyl-tRNA(Asn/Gln) amidotransferase subunit B (499 aa).

Belongs to the GatB/GatE family. GatB subfamily. Heterotrimer of A, B and C subunits.

The catalysed reaction is L-glutamyl-tRNA(Gln) + L-glutamine + ATP + H2O = L-glutaminyl-tRNA(Gln) + L-glutamate + ADP + phosphate + H(+). It catalyses the reaction L-aspartyl-tRNA(Asn) + L-glutamine + ATP + H2O = L-asparaginyl-tRNA(Asn) + L-glutamate + ADP + phosphate + 2 H(+). Allows the formation of correctly charged Asn-tRNA(Asn) or Gln-tRNA(Gln) through the transamidation of misacylated Asp-tRNA(Asn) or Glu-tRNA(Gln) in organisms which lack either or both of asparaginyl-tRNA or glutaminyl-tRNA synthetases. The reaction takes place in the presence of glutamine and ATP through an activated phospho-Asp-tRNA(Asn) or phospho-Glu-tRNA(Gln). The sequence is that of Aspartyl/glutamyl-tRNA(Asn/Gln) amidotransferase subunit B from Mesorhizobium japonicum (strain LMG 29417 / CECT 9101 / MAFF 303099) (Mesorhizobium loti (strain MAFF 303099)).